Here is a 115-residue protein sequence, read N- to C-terminus: Large ribosomal subunit protein bL19 (115 aa).

This sequence belongs to the bacterial ribosomal protein bL19 family. As to quaternary structure, part of the 50S ribosomal subunit.

In terms of biological role, this protein is located at the 30S-50S ribosomal subunit interface and may play a role in the structure and function of the aminoacyl-tRNA binding site. This is Large ribosomal subunit protein bL19 (rplS) from Bacillus subtilis (strain 168).